Here is a 67-residue protein sequence, read N- to C-terminus: Large ribosomal subunit protein bL35 (67 aa).

Residues 1–16 are compositionally biased toward basic residues; that stretch reads MPKMKTKSGAKKRFRV. The interval 1-24 is disordered; the sequence is MPKMKTKSGAKKRFRVRPGGTVKR.

This sequence belongs to the bacterial ribosomal protein bL35 family.

This Polaromonas naphthalenivorans (strain CJ2) protein is Large ribosomal subunit protein bL35.